The primary structure comprises 307 residues: UDP-3-O-acyl-N-acetylglucosamine deacetylase (307 aa).

Zn(2+) contacts are provided by His-78, His-235, and Asp-239. His-262 functions as the Proton donor in the catalytic mechanism.

This sequence belongs to the LpxC family. Zn(2+) is required as a cofactor.

It carries out the reaction a UDP-3-O-[(3R)-3-hydroxyacyl]-N-acetyl-alpha-D-glucosamine + H2O = a UDP-3-O-[(3R)-3-hydroxyacyl]-alpha-D-glucosamine + acetate. The protein operates within glycolipid biosynthesis; lipid IV(A) biosynthesis; lipid IV(A) from (3R)-3-hydroxytetradecanoyl-[acyl-carrier-protein] and UDP-N-acetyl-alpha-D-glucosamine: step 2/6. Functionally, catalyzes the hydrolysis of UDP-3-O-myristoyl-N-acetylglucosamine to form UDP-3-O-myristoylglucosamine and acetate, the committed step in lipid A biosynthesis. This Geotalea uraniireducens (strain Rf4) (Geobacter uraniireducens) protein is UDP-3-O-acyl-N-acetylglucosamine deacetylase.